A 392-amino-acid polypeptide reads, in one-letter code: Solute carrier family 35 member B1 (392 aa).

The disordered stretch occupies residues 1-40; the sequence is MSLTKKIKNEKSLKQEKQTDQLKSNLRNNNNNINNKSKPK. Residues 7 to 20 are compositionally biased toward basic and acidic residues; it reads IKNEKSLKQEKQTD. The span at 25-35 shows a compositional bias: low complexity; that stretch reads NLRNNNNNINN. Helical transmembrane passes span 57 to 77, 97 to 117, 124 to 144, 155 to 175, 179 to 199, 215 to 235, 247 to 267, 285 to 305, and 341 to 361; these read ELFF…YGLV, AFLL…VSLV, NTPF…TFLS, TQVL…LLLF, YPFL…LFML, HLFG…MGPF, ATSM…IMAF, VIKL…FIFL, and LQWA…YISY. A Di-lysine motif motif is present at residues 389–392; sequence KKSL.

Belongs to the nucleotide-sugar transporter family. SLC35B subfamily.

It localises to the endoplasmic reticulum membrane. Functionally, probable sugar transporter. The chain is Solute carrier family 35 member B1 (slc35b1) from Dictyostelium discoideum (Social amoeba).